A 736-amino-acid polypeptide reads, in one-letter code: Gephyrin (736 aa).

The tract at residues 14 to 166 (QIRVGVLTVS…FILPALPHAI (153 aa)) is MPT Mo-transferase. Residues 140 to 316 (LIINLPGSKK…VDITKVARRH (177 aa)) are interaction with GABARAP. Disordered regions lie at residues 181–232 (DELE…DSSS) and 260–290 (TASL…PKVQ). Over residues 187–199 (PSPPPPLSPPPTT) the composition is skewed to pro residues. Phosphoserine occurs at positions 188 and 194. Residue threonine 198 is modified to Phosphothreonine. At serine 200 the chain carries Phosphoserine. Cysteine 212 is lipidated: S-palmitoyl cysteine. Positions 261–290 (ASLSTTPSESPRAQATSRLSTASCPTPKVQ) are enriched in polar residues. Serine 262 carries the post-translational modification Phosphoserine. A phosphothreonine mark is found at threonine 265 and threonine 266. Phosphoserine occurs at positions 268 and 270. Residue cysteine 284 is the site of S-palmitoyl cysteine attachment. Serine 305 is subject to Phosphoserine. The MPT adenylyltransferase stretch occupies residues 326–736 (MDKAFITVLE…VVDVMVIGRL (411 aa)).

It in the N-terminal section; belongs to the MoaB/Mog family. This sequence in the C-terminal section; belongs to the MoeA family. As to quaternary structure, homotrimer, homodimer and homooligomer. Interacts with GABARAP. Interacts with SRGAP2 (via SH3 domain). Interacts with GABRA3. Interacts with GLRB. GABRA3 and GLRB occupy overlapping binding sites. Interacts with ARHGAP32; IQSEC3, INSYN1 and INSYN2A. Mg(2+) is required as a cofactor. Palmitoylated. Palmitoylation is stimulated by GABA type A receptors activity. Palmitoylation by ZDHHC12 regulates clustering at synapses.

It is found in the postsynaptic cell membrane. The protein resides in the cell membrane. The protein localises to the cytoplasm. It localises to the cytosol. Its subcellular location is the cytoskeleton. It is found in the cell projection. The protein resides in the dendrite. The protein localises to the postsynaptic density. It catalyses the reaction molybdopterin + ATP + H(+) = adenylyl-molybdopterin + diphosphate. It carries out the reaction adenylyl-molybdopterin + molybdate = Mo-molybdopterin + AMP + H(+). It functions in the pathway cofactor biosynthesis; molybdopterin biosynthesis. Its activity is regulated as follows. Inhibited by copper and tungsten. In terms of biological role, microtubule-associated protein involved in membrane protein-cytoskeleton interactions. It is thought to anchor the inhibitory glycine receptor (GLYR) to subsynaptic microtubules. Acts as a major instructive molecule at inhibitory synapses, where it also clusters GABA type A receptors. Also has a catalytic activity and catalyzes two steps in the biosynthesis of the molybdenum cofactor. In the first step, molybdopterin is adenylated. Subsequently, molybdate is inserted into adenylated molybdopterin and AMP is released. The protein is Gephyrin of Homo sapiens (Human).